A 319-amino-acid polypeptide reads, in one-letter code: Cell surface A33 antigen (319 aa).

The signal sequence occupies residues 1–21; the sequence is MVGKMWPVLWTLCAVRVTVDA. The Ig-like V-type domain maps to 22–134; that stretch reads ISVETPQDVL…LEGNTKSRVR (113 aa). Residues 22–235 lie on the Extracellular side of the membrane; the sequence is ISVETPQDVL…VAVRSPSMNV (214 aa). Intrachain disulfides connect C43–C117, C146–C222, and C162–C211. 3 N-linked (GlcNAc...) asparagine glycosylation sites follow: N112, N200, and N223. The Ig-like C2-type domain maps to 140–227; the sequence is PPSKPECGIE…GTQFCNITVA (88 aa). Residues 236-256 traverse the membrane as a helical segment; it reads ALYVGIAVGVVAALIIIGIII. The Cytoplasmic segment spans residues 257-319; that stretch reads YCCCCRGKDD…GRESPDHLDQ (63 aa). Composition is skewed to basic and acidic residues over residues 267–295 and 303–319; these read NTEDKEDARPNREAYEEPPEQLRELSRER and QEEQRSTGRESPDHLDQ. The interval 267–319 is disordered; it reads NTEDKEDARPNREAYEEPPEQLRELSREREEEDDYRQEEQRSTGRESPDHLDQ.

Post-translationally, N-glycosylated, contains approximately 8 kDa of N-linked carbohydrate. Palmitoylated. Expressed in normal gastrointestinal epithelium and in 95% of colon cancers.

The protein resides in the membrane. In terms of biological role, may play a role in cell-cell recognition and signaling. This chain is Cell surface A33 antigen (GPA33), found in Homo sapiens (Human).